The primary structure comprises 553 residues: HTH-type transcriptional regulator SgrR (553 aa).

The HTH marR-type domain maps to Met1–Gln117. A DNA-binding region (H-T-H motif) is located at residues Leu26–Lys49. The interval Glu163–Trp494 is solute-binding.

Activates the small RNA gene sgrS under glucose-phosphate stress conditions as well as yfdZ. Represses its own transcription under both stress and non-stress conditions. Might act as a sensor of the intracellular accumulation of phosphoglucose by binding these molecules in its C-terminal solute-binding domain. This Photorhabdus laumondii subsp. laumondii (strain DSM 15139 / CIP 105565 / TT01) (Photorhabdus luminescens subsp. laumondii) protein is HTH-type transcriptional regulator SgrR.